The following is a 396-amino-acid chain: NDP-glycosyltransferase YjiC (396 aa).

UDP contacts are provided by residues asparagine 18, threonine 234, valine 283, histidine 298, and 302-306; that span reads NSTME.

Belongs to the UDP-glycosyltransferase family.

It catalyses the reaction an NDP-glycose + an acceptor = a glycosylated acceptor + NDP.. Functionally, glycosyltransferase that can glycosylate a wide range of substrates, including various flavonoids (flavones, flavonols, flavanones, flavanols, chalcones), isoflavonoids and stilbenes, to produce multiple glycosylated products. It can accept diverse nucleotide diphosphate-D/L-sugars as donors, including ADP-, GDP-, CDP-, TDP- or UDP-alpha-D-glucose, and catalyzes O-, N-, or S-glycosylation. In vitro, catalyzes the glycosylation of, among others, apigenin, 3-hydroxyflavone, phloretin or resveratrol, resulting in multiple glucosylated products, along with mono-, di-, tri- and tetraglucosides. Can also catalyze the glycosylation of the macrolide epothilone A with diverse NDP-D/L-sugars, forming different epothilone A glycoside derivatives. The protein is NDP-glycosyltransferase YjiC of Bacillus licheniformis (strain ATCC 14580 / DSM 13 / JCM 2505 / CCUG 7422 / NBRC 12200 / NCIMB 9375 / NCTC 10341 / NRRL NRS-1264 / Gibson 46).